The primary structure comprises 150 residues: SsrA-binding protein (150 aa).

It belongs to the SmpB family.

The protein localises to the cytoplasm. Required for rescue of stalled ribosomes mediated by trans-translation. Binds to transfer-messenger RNA (tmRNA), required for stable association of tmRNA with ribosomes. tmRNA and SmpB together mimic tRNA shape, replacing the anticodon stem-loop with SmpB. tmRNA is encoded by the ssrA gene; the 2 termini fold to resemble tRNA(Ala) and it encodes a 'tag peptide', a short internal open reading frame. During trans-translation Ala-aminoacylated tmRNA acts like a tRNA, entering the A-site of stalled ribosomes, displacing the stalled mRNA. The ribosome then switches to translate the ORF on the tmRNA; the nascent peptide is terminated with the 'tag peptide' encoded by the tmRNA and targeted for degradation. The ribosome is freed to recommence translation, which seems to be the essential function of trans-translation. The chain is SsrA-binding protein from Campylobacter jejuni subsp. doylei (strain ATCC BAA-1458 / RM4099 / 269.97).